Reading from the N-terminus, the 319-residue chain is Acetyl esterase (319 aa).

Residues 91–93 (HGG) carry the Involved in the stabilization of the negatively charged intermediate by the formation of the oxyanion hole motif. Active-site residues include Ser-165, Asp-262, and His-292.

The protein belongs to the 'GDXG' lipolytic enzyme family. In terms of assembly, homodimer. Interacts with MalT and MelA.

The protein resides in the cytoplasm. Its function is as follows. Displays esterase activity towards short chain fatty esters (acyl chain length of up to 8 carbons). Able to hydrolyze triacetylglycerol (triacetin) and tributyrylglycerol (tributyrin), but not trioleylglycerol (triolein) or cholesterol oleate. Negatively regulates MalT activity by antagonizing maltotriose binding. Inhibits MelA galactosidase activity. This Shigella boydii serotype 4 (strain Sb227) protein is Acetyl esterase.